The sequence spans 955 residues: MFAWWGRTVYRYRFIVIGITVALCLCGGVFGLSLGKHVTQSGFYDDSSQSVKASILGDQVYGRDRSGHIVAIFHAPDGKTVNDPAWAKKITDELNQFQRNNSNKVTGWAGYLRASDTTNTVVQGMATPDKKYTFVSIPLKGDDDDTILNNYKAIAPDLQKLDGGTVQLAGLDPIANALTSTIATDQRRMEVLALPLVAVVLFLVFGGVIAACLPVMVGGLSIAGALGILRFIALFGPVHFFAQPVVSLIGLGIAVDYGLFVVSRFREEIAEGYDTEAAVRRTVMTAGRTVTFSAVLIAASGASLLLLPQGFVKSLTYALIAAVTLAALLSITLLPACLAILAKHVDALGVRTLFRVPLLRNWRMSHACLNWLADRLQKTKTREEVEAGFWGKLVNFVMKRPLVFAIPIVIGMILLVIPLGNLSFGGMSEKYLPPNNAVRQSQEHFDQLFPGYRTNPLTLVIQTSNHQPVTDQEIADIRSKAMAISGFIEPDNNYVNMWQERTVAPGASKDPSVRVLQNGLINPNDASKKINELRSITPPKGLTVSVGGTPALEQDSIHSLVAQAPLMVIMLITTTMLLMFLAFGSFVLPIKAAVMSALTLGSTMGILTWIFVDGHLSKWLNFTPTPLMVVIIALVVAVGYGLATDYEVFLVSRMVEARAESMSTQEAVRIGTASTGRLITAAALVLAVVAGSFVFSDLVMMKYLAFGLMAALLLDATVVRMFLVPSVMKLLGDDCWWAPRWARLLQNRIGLGEIHLPDERRRPTVSGRPVRPPVTAASLAAPASRVPRGPTHPATLEPSQRARSGLASRPQIKRPQELPSGASTARIQMRPSQSVEATTTRLSVPGNAPTTAAVSSSQGVQAVPLAATRHPLPTPSPASGQTRAMPVPANRSSDNASETAEPTTALPIMRPQDNDSEVATEKLNALGQGDNSRQHRRATGGGISAQDLLRREGRL.

Residues Met-1–Arg-13 are Cytoplasmic-facing. Residues Phe-14–Leu-34 form a helical membrane-spanning segment. Over Gly-35 to Glu-190 the chain is Periplasmic. Gln-40–Tyr-44 contacts a 1,2-diacylglycero-3-phosphoethanolamine. The chain crosses the membrane as a helical span at residues Val-191 to Leu-213. At Pro-214–Gly-219 the chain is on the cytoplasmic side. Residues Leu-220 to Gly-236 traverse the membrane as a helical segment. At Pro-237–Pro-244 the chain is on the periplasmic side. Residues Val-245 to Val-262 traverse the membrane as a helical segment. The Cytoplasmic segment spans residues Ser-263–Thr-291. The chain crosses the membrane as a helical span at residues Phe-292 to Val-312. Residues Lys-313–Leu-319 are Periplasmic-facing. Residues Ile-320–Ile-340 form a helical membrane-spanning segment. At Leu-341–Pro-401 the chain is on the cytoplasmic side. Residues Leu-402 to Leu-422 form a helical membrane-spanning segment. The Periplasmic portion of the chain corresponds to Ser-423–Met-567. A helical transmembrane segment spans residues Val-568–Leu-588. At Pro-589 to Lys-591 the chain is on the cytoplasmic side. A helical membrane pass occupies residues Ala-592 to Val-612. Residues Asp-613–Asn-621 lie on the Periplasmic side of the membrane. Residues Phe-622–Leu-642 form a helical membrane-spanning segment. Over Ala-643–Leu-678 the chain is Cytoplasmic. A helical membrane pass occupies residues Ile-679–Val-699. Over Met-700–Tyr-703 the chain is Periplasmic. Residues Leu-704 to Val-724 form a helical membrane-spanning segment. The Cytoplasmic portion of the chain corresponds to Pro-725–Leu-955. Positions Glu-759 to Leu-955 are disordered. Polar residues-rich tracts occupy residues Gly-821–Val-860 and Asn-890–Pro-902.

It belongs to the resistance-nodulation-cell division (RND) (TC 2.A.6) family. MmpL subfamily.

The protein resides in the cell inner membrane. It is found in the cell septum. The protein localises to the cell tip. In terms of biological role, transports trehalose monomycolate (TMM) to the cell wall. Flips TMM across the inner membrane. Membrane potential is not required for this function. Transports probably phosphatidylethanolamine (PE) as well. Contributes to membrane potential, cell wall composition, antibiotic susceptibility and fitness. The chain is Probable trehalose monomycolate exporter MmpL3 (mmpL3) from Mycobacterium leprae (strain TN).